The primary structure comprises 299 residues: Taste receptor type 2 member 16 (299 aa).

Residues 1–5 are Extracellular-facing; the sequence is MVPTQ. The helical transmembrane segment at 6-26 threads the bilayer; sequence VTIFSIIMYVLESLVIIVQSC. Residues 27–47 are Cytoplasmic-facing; the sequence is TTVAVLFREWMHFQRLSPVET. Residues 48 to 68 traverse the membrane as a helical segment; that stretch reads ILISLGISHFCLQWTSMLYNF. Residues 69–82 lie on the Extracellular side of the membrane; it reads GTYSRPVLLFWKVS. Residues 83-103 traverse the membrane as a helical segment; that stretch reads VVWEFMNILTFWLTSWLAVLY. The Cytoplasmic portion of the chain corresponds to 104-125; it reads CVKVSSFTHPIFLWLRMKILKL. The helical transmembrane segment at 126 to 146 threads the bilayer; the sequence is VLWLILGALIASCLSIIPSVV. At 147–183 the chain is on the extracellular side; sequence KYHIQMELVTLDNLPKNNSLILRLQQFEWYFSNPLKM. Residue asparagine 163 is glycosylated (N-linked (GlcNAc...) asparagine). Residues 184 to 204 form a helical membrane-spanning segment; sequence IGFGIPFFVFLASIILLTVSL. At 205-233 the chain is on the cytoplasmic side; it reads VQHWVQMKHYSSSNSSLKAQFTVLKSLAT. Residues 234–254 traverse the membrane as a helical segment; it reads FFTFFTSYFLTIVISFIGTVF. At 255–258 the chain is on the extracellular side; it reads DKKS. A helical membrane pass occupies residues 259–279; that stretch reads WFWVCEAVIYGLVCIHFTSLM. At 280–299 the chain is on the cytoplasmic side; that stretch reads MSNPALKKALKLQFWSPEPS.

Belongs to the G-protein coupled receptor T2R family. In terms of assembly, interacts with RTP3 and RTP4.

It is found in the cell membrane. Functionally, gustducin-coupled receptor implicated in the perception of bitter compounds in the oral cavity and the gastrointestinal tract. Signals through PLCB2 and the calcium-regulated cation channel TRPM5. This Mus musculus (Mouse) protein is Taste receptor type 2 member 16 (Tas2r16).